The primary structure comprises 362 residues: Transcriptional repressor PifC (362 aa).

In terms of biological role, transcription repression of its own gene by binding to the PIF operator (pifO) and replication initiation from the primary origin (ori-1). Transcriptional repressor of the pifA and pifB. The chain is Transcriptional repressor PifC (pifC) from Escherichia coli (strain K12).